The primary structure comprises 233 residues: 5'-methylthioadenosine/S-adenosylhomocysteine nucleosidase (233 aa).

Glu-12 (proton acceptor) is an active-site residue. Substrate is bound by residues Gly-78, Ile-156, and 177–178; that span reads ME. Residue Asp-201 is the Proton donor of the active site.

It belongs to the PNP/UDP phosphorylase family. MtnN subfamily.

It catalyses the reaction S-adenosyl-L-homocysteine + H2O = S-(5-deoxy-D-ribos-5-yl)-L-homocysteine + adenine. The catalysed reaction is S-methyl-5'-thioadenosine + H2O = 5-(methylsulfanyl)-D-ribose + adenine. It carries out the reaction 5'-deoxyadenosine + H2O = 5-deoxy-D-ribose + adenine. It participates in amino-acid biosynthesis; L-methionine biosynthesis via salvage pathway; S-methyl-5-thio-alpha-D-ribose 1-phosphate from S-methyl-5'-thioadenosine (hydrolase route): step 1/2. Functionally, catalyzes the irreversible cleavage of the glycosidic bond in both 5'-methylthioadenosine (MTA) and S-adenosylhomocysteine (SAH/AdoHcy) to adenine and the corresponding thioribose, 5'-methylthioribose and S-ribosylhomocysteine, respectively. Also cleaves 5'-deoxyadenosine, a toxic by-product of radical S-adenosylmethionine (SAM) enzymes, into 5-deoxyribose and adenine. This is 5'-methylthioadenosine/S-adenosylhomocysteine nucleosidase from Listeria monocytogenes serotype 4b (strain CLIP80459).